The sequence spans 523 residues: Cytochrome P450 52A3-A (523 aa).

Residues 17–34 (WYTILFGAAVTYFLSIAL) traverse the membrane as a helical segment. C471 lines the heme pocket.

Belongs to the cytochrome P450 family. Requires heme as cofactor.

The protein localises to the membrane. Functionally, together with an NADPH cytochrome P450 the enzyme system catalyzes the terminal hydroxylation as the first step in the assimilation of alkanes and fatty acids. This is Cytochrome P450 52A3-A (CYP52A3-A) from Candida maltosa (Yeast).